Consider the following 251-residue polypeptide: Zinc import ATP-binding protein ZnuC (251 aa).

An ABC transporter domain is found at 5 to 220; that stretch reads VSLENVSVSF…PEFISMFGPR (216 aa). 37 to 44 is an ATP binding site; it reads GPNGAGKS.

It belongs to the ABC transporter superfamily. Zinc importer (TC 3.A.1.15.5) family. The complex is composed of two ATP-binding proteins (ZnuC), two transmembrane proteins (ZnuB) and a solute-binding protein (ZnuA).

The protein resides in the cell inner membrane. It carries out the reaction Zn(2+)(out) + ATP(in) + H2O(in) = Zn(2+)(in) + ADP(in) + phosphate(in) + H(+)(in). Functionally, part of the ABC transporter complex ZnuABC involved in zinc import. Responsible for energy coupling to the transport system. In Salmonella choleraesuis (strain SC-B67), this protein is Zinc import ATP-binding protein ZnuC.